A 308-amino-acid chain; its full sequence is Ornithine carbamoyltransferase (308 aa).

Carbamoyl phosphate is bound by residues 57-60 (STRT), Gln-84, Arg-108, and 135-138 (HPCQ). L-ornithine-binding positions include Asn-166, Asp-224, and 228 to 229 (SM). Carbamoyl phosphate contacts are provided by residues 264-265 (CL) and Arg-292.

Belongs to the aspartate/ornithine carbamoyltransferase superfamily. OTCase family.

Its subcellular location is the cytoplasm. It carries out the reaction carbamoyl phosphate + L-ornithine = L-citrulline + phosphate + H(+). It functions in the pathway amino-acid degradation; L-arginine degradation via ADI pathway; carbamoyl phosphate from L-arginine: step 2/2. Its function is as follows. Reversibly catalyzes the transfer of the carbamoyl group from carbamoyl phosphate (CP) to the N(epsilon) atom of ornithine (ORN) to produce L-citrulline. The polypeptide is Ornithine carbamoyltransferase (Ralstonia pickettii (strain 12J)).